The primary structure comprises 355 residues: Neurogenic differentiation factor 1 (355 aa).

The segment at 1–93 is disordered; it reads MTKSYSESGL…GPKKKKMTKA (93 aa). A compositionally biased stretch (acidic residues) spans 58-77; the sequence is DEEDEDEDLEEEDEEEEEDD. Positions 80 to 92 are enriched in basic residues; it reads PKRRGPKKKKMTK. Positions 86–92 match the Nuclear localization signal motif; sequence KKKKMTK. In terms of domain architecture, bHLH spans 100–152; the sequence is LRRMKANARERNRMHGLNAALDNLRKVVPCYSKTQKLSKIETLRLAKNYIWAL. Residues serine 161, serine 258, serine 265, and serine 273 each carry the phosphoserine modification. Serine 334 carries the phosphoserine; by CaMK2 modification.

As to quaternary structure, efficient DNA-binding requires dimerization with another bHLH protein. Heterodimer with TCF3/E47; the heterodimer is inhibited in presence of ID2, but not NR0B2, to E-box element. Interacts with EP300; the interaction is inhibited by NR0B2. Interacts with RREB1. Interacts with ATOH8. Post-translationally, phosphorylated. In islet cells, phosphorylated on Ser-273 upon glucose stimulation; which may be required for nuclear localization. In activated neurons, phosphorylated on Ser-334; which promotes dendritic growth. Phosphorylated by MAPK1; phosphorylation regulates heterodimerization and DNA-binding activities. Phosphorylation on Ser-265 and Ser-273 increases transactivation on the insulin promoter in glucose-stimulated insulinoma cells. As to expression, most abundant in pancreatic alpha- and beta-cells, less in brain and intestine.

The protein resides in the cytoplasm. Its subcellular location is the nucleus. Its function is as follows. Acts as a transcriptional activator: mediates transcriptional activation by binding to E box-containing promoter consensus core sequences 5'-CANNTG-3'. Associates with the p300/CBP transcription coactivator complex to stimulate transcription of the secretin gene as well as the gene encoding the cyclin-dependent kinase inhibitor CDKN1A. Contributes to the regulation of several cell differentiation pathways, like those that promote the formation of early retinal ganglion cells, inner ear sensory neurons, granule cells forming either the cerebellum or the dentate gyrus cell layer of the hippocampus, endocrine islet cells of the pancreas and enteroendocrine cells of the small intestine. Together with PAX6 or SIX3, is required for the regulation of amacrine cell fate specification. Also required for dendrite morphogenesis and maintenance in the cerebellar cortex. Associates with chromatin to enhancer regulatory elements in genes encoding key transcriptional regulators of neurogenesis. This chain is Neurogenic differentiation factor 1 (NEUROD1), found in Mesocricetus auratus (Golden hamster).